We begin with the raw amino-acid sequence, 806 residues long: ATP-dependent RNA helicase DBP7 (806 aa).

The interval 24-135 (KGGRWRDRLK…AEPAKASNAP (112 aa)) is disordered. A compositionally biased stretch (polar residues) spans 46–56 (PSSTPPRNRTT). A compositionally biased stretch (basic and acidic residues) spans 69 to 78 (PRTEDGESHR). Over residues 100 to 113 (GQISSSLFTSNPSA) the composition is skewed to polar residues. Positions 141 to 170 (ENFHSLGVSRRVAQHLATKLEMKAPTAIQK) match the Q motif motif. A Helicase ATP-binding domain is found at 174 to 380 (PQLINGDSDA…EISLEDAIHI (207 aa)). 187 to 194 (AETGSGKT) contacts ATP. The short motif at 309-312 (DEGD) is the DEAD box element. The region spanning 413-611 (RLVTLIALLK…GLASVVNLPS (199 aa)) is the Helicase C-terminal domain. 2 disordered regions span residues 642-677 (PAGA…YKPK) and 741-784 (TAAN…VDED). Positions 755 to 768 (SGGGGGGGRVGFGR) are enriched in gly residues.

Belongs to the DEAD box helicase family. DDX31/DBP7 subfamily.

It localises to the nucleus. The protein localises to the nucleolus. The catalysed reaction is ATP + H2O = ADP + phosphate + H(+). Its function is as follows. ATP-binding RNA helicase involved in the biogenesis of 60S ribosomal subunits and is required for the normal formation of 25S and 5.8S rRNAs. The sequence is that of ATP-dependent RNA helicase DBP7 (DBP7) from Chaetomium globosum (strain ATCC 6205 / CBS 148.51 / DSM 1962 / NBRC 6347 / NRRL 1970) (Soil fungus).